Here is a 537-residue protein sequence, read N- to C-terminus: Chaperonin GroEL (537 aa).

ATP-binding positions include 29-32 (TLGP), 86-90 (DGTTT), glycine 413, 477-479 (NAA), and aspartate 493.

The protein belongs to the chaperonin (HSP60) family. In terms of assembly, forms a cylinder of 14 subunits composed of two heptameric rings stacked back-to-back. Interacts with the co-chaperonin GroES.

It is found in the cytoplasm. It carries out the reaction ATP + H2O + a folded polypeptide = ADP + phosphate + an unfolded polypeptide.. Functionally, together with its co-chaperonin GroES, plays an essential role in assisting protein folding. The GroEL-GroES system forms a nano-cage that allows encapsulation of the non-native substrate proteins and provides a physical environment optimized to promote and accelerate protein folding. This Parascardovia denticolens (Bifidobacterium denticolens) protein is Chaperonin GroEL.